The following is a 308-amino-acid chain: MAEYQNIFSQVQVRGPADLGMTEDVNLANRSGVGPFSTLLGWFGNAQLGPIYLGSLGVLSLFSGLMWFFTIGIWFWYQAGWNPAVFLRDLFFFSLEPPAPEYGLSFAAPLKEGGLWLIASFFMFVAVWSWWGRTYLRAQALGMGKHTAWAFLSAIWLWMVLGFIRPILMGSWSEAVPYGIFSHLDWTNNFSLVHGNLFYNPFHGLSIAFLYGSALLFAMHGATILAVSRFGGERELEQIADRGTAAERAALFWRWTMGFNATMEGIHRWAIWMAVLVTLTGGIGILLSGTVVDNWYVWGQNHGMAPLN.

Transmembrane regions (helical) follow at residues 54–80 (GSLGVLSLFSGLMWFFTIGIWFWYQAG), 111–140 (KEGGLWLIASFFMFVAVWSWWGRTYLRAQA), and 143–168 (MGKHTAWAFLSAIWLWMVLGFIRPIL). The (7R,8Z)-bacteriochlorophyll b site is built by His-183 and His-203. A helical membrane pass occupies residues 198–226 (FYNPFHGLSIAFLYGSALLFAMHGATILA). Residues His-220 and Glu-235 each coordinate Fe cation. Trp-253 contacts a ubiquinone. The chain crosses the membrane as a helical span at residues 260-286 (NATMEGIHRWAIWMAVLVTLTGGIGIL). His-267 serves as a coordination point for Fe cation.

Belongs to the reaction center PufL/M/PsbA/D family. Reaction center is composed of four bacteriochlorophylls, two bacteriopheophytins, two ubiquinones, one iron, and three highly hydrophobic polypeptide chains (designated L, M, and H).

It is found in the cellular chromatophore membrane. In terms of biological role, the reaction center is a membrane-bound complex that mediates the initial photochemical event in the electron transfer process of photosynthesis. This is Reaction center protein M chain (pufM) from Cereibacter sphaeroides (strain ATCC 17023 / DSM 158 / JCM 6121 / CCUG 31486 / LMG 2827 / NBRC 12203 / NCIMB 8253 / ATH 2.4.1.) (Rhodobacter sphaeroides).